The chain runs to 675 residues: PTS system glucose-specific EIICBA component (675 aa).

One can recognise a PTS EIIC type-1 domain in the interval 3–414 (KKLFGQMQRI…FNYKTPGRED (412 aa)). A run of 11 helical transmembrane segments spans residues 16 to 36 (LMLPVAILPAAGLLLAIGTAF), 59 to 79 (MLTGAGGIIFDNLPIIFALGV), 81 to 101 (IGLAGGDGVAAIAAFVGFIIL), 126 to 146 (VLGIPTLQTGVFGGIIIGALA), 170 to 190 (FVPIMMATTSFILAFPMAIIW), 211 to 231 (LAVFLFGFIKRLLIPFGLHHI), 273 to 293 (FMQGEFPVMMFGLPAAALAIY), 303 to 323 (VVAGLMISAALTSFLTGITEP), 328 to 348 (FLFVAPFLFVIHAVLDGLSFL), 355 to 375 (VHLGYTFSGGFIDYVLLGILP), and 378 to 398 (TAWWLVIPVGIIYAVIYYFVF). In terms of domain architecture, PTS EIIB type-1 spans 425–506 (SQLPFDVLKA…AKIISGEITK (82 aa)). The active-site Phosphocysteine intermediate; for EIIB activity is the Cys447. The 105-residue stretch at 547 to 651 (DKVFSEKMMG…SIITPVIITN (105 aa)) folds into the PTS EIIA type-1 domain. Catalysis depends on His599, which acts as the Tele-phosphohistidine intermediate; for EIIA activity.

Its subcellular location is the cell membrane. The catalysed reaction is N(pros)-phospho-L-histidyl-[protein] + D-glucose(out) = D-glucose 6-phosphate(in) + L-histidyl-[protein]. Functionally, the phosphoenolpyruvate-dependent sugar phosphotransferase system (sugar PTS), a major carbohydrate active transport system, catalyzes the phosphorylation of incoming sugar substrates concomitantly with their translocation across the cell membrane. This system is involved in glucose transport. The protein is PTS system glucose-specific EIICBA component (ptsG) of Staphylococcus epidermidis.